The primary structure comprises 489 residues: Betaine aldehyde dehydrogenase (489 aa).

K(+)-binding residues include T26 and D93. Position 150 to 152 (150 to 152 (GAW)) interacts with NAD(+). Residue K162 is the Charge relay system of the active site. 176–179 (KPSE) serves as a coordination point for NAD(+). V180 lines the K(+) pocket. 229–232 (GVET) provides a ligand contact to NAD(+). L245 contributes to the K(+) binding site. The Proton acceptor role is filled by E251. NAD(+)-binding residues include G253, C285, and E386. C285 serves as the catalytic Nucleophile. C285 is modified (cysteine sulfenic acid (-SOH)). Residues K456 and G459 each contribute to the K(+) site. Residue E463 is the Charge relay system of the active site.

Belongs to the aldehyde dehydrogenase family. In terms of assembly, dimer of dimers. It depends on K(+) as a cofactor.

The catalysed reaction is betaine aldehyde + NAD(+) + H2O = glycine betaine + NADH + 2 H(+). It participates in amine and polyamine biosynthesis; betaine biosynthesis via choline pathway; betaine from betaine aldehyde: step 1/1. Its function is as follows. Involved in the biosynthesis of the osmoprotectant glycine betaine. Catalyzes the irreversible oxidation of betaine aldehyde to the corresponding acid. The protein is Betaine aldehyde dehydrogenase of Burkholderia vietnamiensis (strain G4 / LMG 22486) (Burkholderia cepacia (strain R1808)).